The sequence spans 367 residues: tRNA pseudouridine synthase D (367 aa).

The active-site Nucleophile is Asp80. Positions 156 to 316 constitute a TRUD domain; it reads GIPNWFGEQR…LKQERRALRL (161 aa).

The protein belongs to the pseudouridine synthase TruD family.

The catalysed reaction is uridine(13) in tRNA = pseudouridine(13) in tRNA. Responsible for synthesis of pseudouridine from uracil-13 in transfer RNAs. The polypeptide is tRNA pseudouridine synthase D (Xanthomonas campestris pv. campestris (strain B100)).